The sequence spans 312 residues: uncharacterized protein (312 aa).

Basic and acidic residues-rich tracts occupy residues 1–17 (MAKY…EQLE) and 28–39 (PDRDGPRHSAKL). The tract at residues 1-39 (MAKYDHLELVRLPEQLERRKHGGGSPPPDRDGPRHSAKL) is disordered.

This is an uncharacterized protein from Sinorhizobium fredii (strain NBRC 101917 / NGR234).